The primary structure comprises 297 residues: 4-hydroxybenzoate octaprenyltransferase (297 aa).

Transmembrane regions (helical) follow at residues 29–49 (IGTY…AEGV), 55–75 (LFIF…VNDF), 102–122 (AWTL…LTNA), 124–141 (TVYL…YPFM), 146–166 (FYPQ…AFTA), 169–189 (GSLP…TVAY), 219–239 (VIIV…GVRF), 241–261 (LGQW…WEFW), and 270–290 (VCFK…AGIV).

This sequence belongs to the UbiA prenyltransferase family. Mg(2+) is required as a cofactor.

Its subcellular location is the cell inner membrane. It carries out the reaction all-trans-octaprenyl diphosphate + 4-hydroxybenzoate = 4-hydroxy-3-(all-trans-octaprenyl)benzoate + diphosphate. It functions in the pathway cofactor biosynthesis; ubiquinone biosynthesis. Catalyzes the prenylation of para-hydroxybenzoate (PHB) with an all-trans polyprenyl group. Mediates the second step in the final reaction sequence of ubiquinone-8 (UQ-8) biosynthesis, which is the condensation of the polyisoprenoid side chain with PHB, generating the first membrane-bound Q intermediate 3-octaprenyl-4-hydroxybenzoate. In Stutzerimonas stutzeri (strain A1501) (Pseudomonas stutzeri), this protein is 4-hydroxybenzoate octaprenyltransferase.